Here is a 350-residue protein sequence, read N- to C-terminus: Cytosolic Fe-S cluster assembly factor NBP35 (350 aa).

Residues 1–30 (MENGDIPEDANEHCPGPQSESAGKSDSCAG) form a disordered region. Cys-14, Cys-28, Cys-31, and Cys-37 together coordinate [4Fe-4S] cluster. An ATP-binding site is contributed by 67 to 74 (GKGGVGKS).

This sequence belongs to the Mrp/NBP35 ATP-binding proteins family. NUBP1/NBP35 subfamily. As to quaternary structure, homodimer and homotetramer. Predominantly homodimeric. The cofactor is [4Fe-4S] cluster.

The protein resides in the cytoplasm. Component of the cytosolic iron-sulfur (Fe-S) protein assembly (CIA) machinery. Required for maturation of extramitochondrial Fe-S proteins. Functions as a Fe-S scaffold, mediating the de novo assembly of an Fe-S cluster and its transfer to target apoproteins. Essential for embryo development. This is Cytosolic Fe-S cluster assembly factor NBP35 from Arabidopsis thaliana (Mouse-ear cress).